We begin with the raw amino-acid sequence, 610 residues long: MNSQDLKKRQEKIRNFSIIAHIDHGKSTLADRILEKTETVSSREMQAQLLDSMDLERERGITIKLNAIELNYTAKDGETYIFHLIDTPGHVDFTYEVSRSLAACEGAILVVDAAQGIEAQTLANVYLALDNDLEILPVINKIDLPAADPERVRHEVEDVIGLDASEAVLASAKAGIGIEEILEQIVEKVPAPTGDVDAPLQALIFDSVYDAYRGVILQVRIVNGIVKSGDKIQMMSNGKTFDVTEVGIFTPKAVGRDFLATGDVGYVAASIKTVADTRVGDTVTLANNPAKEALHGYKQMNPMVFAGIYPIESNKYNDLREALEKLQLNDASLQFEPETSQALGFGFRCGFLGLLHMDVIQERLEREFNIDLIMTAPSVVYHVHTTDEDMIEVSNPSEFPDPTRVAFIEEPYVKAQIMVPQEFVGAVMELSQRKRGDFVTMDYIDDNRVNVIYQIPLAEIVFDFFDKLKSSTRGYASFDYDMSEYRRSQLVKMDILLNGDKVDALSFIVHKEFAYERGKIIVEKLKKIIPRQQFEVPIQAAIGQKIVARSDIKALRKNVLAKCYGGDVSRKRKLLEKQKAGKKRMKAIGSVEVPQEAFLSVLSMDDDAKK.

One can recognise a tr-type G domain in the interval 11-193; the sequence is EKIRNFSIIA…QIVEKVPAPT (183 aa). GTP is bound by residues 23–28 and 140–143; these read DHGKST and NKID.

The protein belongs to the TRAFAC class translation factor GTPase superfamily. Classic translation factor GTPase family. LepA subfamily.

It is found in the cell membrane. The enzyme catalyses GTP + H2O = GDP + phosphate + H(+). Required for accurate and efficient protein synthesis under certain stress conditions. May act as a fidelity factor of the translation reaction, by catalyzing a one-codon backward translocation of tRNAs on improperly translocated ribosomes. Back-translocation proceeds from a post-translocation (POST) complex to a pre-translocation (PRE) complex, thus giving elongation factor G a second chance to translocate the tRNAs correctly. Binds to ribosomes in a GTP-dependent manner. This chain is Elongation factor 4, found in Streptococcus pyogenes serotype M2 (strain MGAS10270).